A 338-amino-acid chain; its full sequence is UDP-N-acetylenolpyruvoylglucosamine reductase (338 aa).

The FAD-binding PCMH-type domain maps to 17–188 (IAARTDWWID…MYVDYRLRLK (172 aa)). The active site involves Arg-164. Ser-237 (proton donor) is an active-site residue. The active site involves Glu-333.

The protein belongs to the MurB family. The cofactor is FAD.

The protein resides in the cytoplasm. It carries out the reaction UDP-N-acetyl-alpha-D-muramate + NADP(+) = UDP-N-acetyl-3-O-(1-carboxyvinyl)-alpha-D-glucosamine + NADPH + H(+). It functions in the pathway cell wall biogenesis; peptidoglycan biosynthesis. Functionally, cell wall formation. This chain is UDP-N-acetylenolpyruvoylglucosamine reductase, found in Porphyromonas gingivalis (strain ATCC BAA-308 / W83).